The following is a 410-amino-acid chain: MSWDQVWIDVNLATMDPSISAPYGAITNAAIAVKDGKIAWLGPRSELPAFDVLSIPVYRGKGGWITPGLIDAHTHLIFAGNRANEFELRLQGASYEEIARSGGGIISTVKACREADEAELFELGRQRLNALAKEGVTTVEIKSGYGLDTETELKILRVARELGKHHHVDVKTTFLGAHAIPPEYKDNSDGYVDLIINKMLPAVIAENLADAVDVFCENIAFNLEQTERVLSAAKAAGLEIKLHAEQLTNMGGSALAARLGAKSVDHIEYLDEAGVKALSESGTCAVLLPGAFYFLRETQKPPIDLLRQYGVPMVLASDFNPGSSPICSTLLMLNMGCTLFRLTPEEALKGLTLNAAKALGIEDNVGSLVVGKQADFCLWDIATPAQLAYSYGVNPCKDVVKNGKLVHQHT.

Fe(3+) is bound by residues His-73 and His-75. Zn(2+) is bound by residues His-73 and His-75. 4-imidazolone-5-propanoate is bound by residues Arg-82, Tyr-145, and His-178. An N-formimidoyl-L-glutamate-binding site is contributed by Tyr-145. Residue His-243 participates in Fe(3+) binding. His-243 provides a ligand contact to Zn(2+). Gln-246 contacts 4-imidazolone-5-propanoate. Asp-318 contacts Fe(3+). Asp-318 is a Zn(2+) binding site. Residues Asn-320 and Gly-322 each coordinate N-formimidoyl-L-glutamate. Ser-323 contributes to the 4-imidazolone-5-propanoate binding site.

It belongs to the metallo-dependent hydrolases superfamily. HutI family. Requires Zn(2+) as cofactor. The cofactor is Fe(3+).

The protein localises to the cytoplasm. The enzyme catalyses 4-imidazolone-5-propanoate + H2O = N-formimidoyl-L-glutamate. It participates in amino-acid degradation; L-histidine degradation into L-glutamate; N-formimidoyl-L-glutamate from L-histidine: step 3/3. In terms of biological role, catalyzes the hydrolytic cleavage of the carbon-nitrogen bond in imidazolone-5-propanoate to yield N-formimidoyl-L-glutamate. It is the third step in the universal histidine degradation pathway. The chain is Imidazolonepropionase from Shewanella baltica (strain OS223).